Here is a 283-residue protein sequence, read N- to C-terminus: Probable endonuclease 4 (283 aa).

Residues His69, His113, Glu148, Asp182, His185, His217, Asp230, His232, and Glu262 each coordinate Zn(2+).

It belongs to the AP endonuclease 2 family. It depends on Zn(2+) as a cofactor.

The enzyme catalyses Endonucleolytic cleavage to 5'-phosphooligonucleotide end-products.. Endonuclease IV plays a role in DNA repair. It cleaves phosphodiester bonds at apurinic or apyrimidinic (AP) sites, generating a 3'-hydroxyl group and a 5'-terminal sugar phosphate. The protein is Probable endonuclease 4 of Bifidobacterium longum (strain NCC 2705).